The primary structure comprises 395 residues: Cystathionine beta-lyase (395 aa).

At lysine 210 the chain carries N6-(pyridoxal phosphate)lysine.

It belongs to the trans-sulfuration enzymes family. Homotetramer. Pyridoxal 5'-phosphate serves as cofactor.

It is found in the cytoplasm. The catalysed reaction is L,L-cystathionine + H2O = L-homocysteine + pyruvate + NH4(+). The enzyme catalyses an S-substituted L-cysteine + H2O = a thiol + pyruvate + NH4(+). Its pathway is amino-acid biosynthesis; L-methionine biosynthesis via de novo pathway; L-homocysteine from L-cystathionine: step 1/1. Catalyzes the cleavage of cystathionine to homocysteine, pyruvate and ammonia during methionine biosynthesis. This is Cystathionine beta-lyase (metC) from Salmonella typhimurium (strain LT2 / SGSC1412 / ATCC 700720).